The sequence spans 387 residues: Alpha-2B adrenergic receptor (387 aa).

A helical transmembrane segment spans residues 1–25 (AIAAVITFLILFTIFGNALVILAVL). Over 26 to 36 (TSRSLRAPQNL) the chain is Cytoplasmic. Residues 37 to 62 (FLVSLAAADILVATLIIPFSLANELL) form a helical membrane-spanning segment. Over 63–72 (GYWYFRHTWC) the chain is Extracellular. Cys-72 and Cys-151 form a disulfide bridge. A helical membrane pass occupies residues 73-95 (XVYLALDVLFCTSSIVHLCAISL). The Cytoplasmic segment spans residues 96 to 117 (DRYWAVSRALEYNSKRTPRRIK). Residues 118 to 140 (CIILTVWLIAAAISLPPLIYKGD) form a helical membrane-spanning segment. The Extracellular portion of the chain corresponds to 141–156 (QDPQPRGRPQCKLNQE). Residues 157-180 (AWYILSSSIGSFFVPCLIMILVYL) traverse the membrane as a helical segment. Topologically, residues 181 to 351 (RIYLIAKRSS…LTREKRFTFV (171 aa)) are cytoplasmic. Residues 193–303 (RKPRAKGXPR…VPASPALACS (111 aa)) form a disordered region. Residues 279–290 (PEEEAEEEEECG) show a composition bias toward acidic residues. A helical membrane pass occupies residues 352-375 (LAVVIGVFVLCWFPFFFSYSLGAI). Topologically, residues 376 to 384 (CPQHCKVPH) are extracellular. A helical transmembrane segment spans residues 385–387 (GLF).

This sequence belongs to the G-protein coupled receptor 1 family. Adrenergic receptor subfamily. ADRA2B sub-subfamily. As to quaternary structure, interacts with RAB26. Interacts with PPP1R9B. Interacts with GGA1, GGA2 and GGA3.

It is found in the cell membrane. In terms of biological role, alpha-2 adrenergic receptors mediate the catecholamine-induced inhibition of adenylate cyclase through the action of G proteins. The polypeptide is Alpha-2B adrenergic receptor (ADRA2B) (Macroscelides proboscideus (Short-eared elephant shrew)).